The chain runs to 70 residues: Beta-defensin 131B (70 aa).

The signal sequence occupies residues 1 to 22 (MRVLFFVFGVLSLMSTVPPTRS). Cystine bridges form between cysteine 29/cysteine 56, cysteine 36/cysteine 50, and cysteine 40/cysteine 57.

This sequence belongs to the beta-defensin family.

The protein localises to the secreted. Functionally, has antibacterial activity. The chain is Beta-defensin 131B from Homo sapiens (Human).